Here is a 204-residue protein sequence, read N- to C-terminus: Urease accessory protein UreG (204 aa).

A GTP-binding site is contributed by 12 to 19 (GPVGSGKT).

It belongs to the SIMIBI class G3E GTPase family. UreG subfamily. In terms of assembly, homodimer. UreD, UreF and UreG form a complex that acts as a GTP-hydrolysis-dependent molecular chaperone, activating the urease apoprotein by helping to assemble the nickel containing metallocenter of UreC. The UreE protein probably delivers the nickel.

The protein localises to the cytoplasm. In terms of biological role, facilitates the functional incorporation of the urease nickel metallocenter. This process requires GTP hydrolysis, probably effectuated by UreG. This is Urease accessory protein UreG from Pseudomonas fluorescens (strain ATCC BAA-477 / NRRL B-23932 / Pf-5).